Reading from the N-terminus, the 150-residue chain is uncharacterized protein (150 aa).

Residues 5–66 enclose the HTH asnC-type domain; it reads LDRTDKMLLE…KPNYKKLNLG (62 aa). Residues 24–43 constitute a DNA-binding region (H-T-H motif); that stretch reads IAALSKKLGIPRTTVHYRIK.

This is an uncharacterized protein from Pyrococcus furiosus (strain ATCC 43587 / DSM 3638 / JCM 8422 / Vc1).